The following is a 320-amino-acid chain: Integrin-binding sialoprotein (320 aa).

The signal sequence occupies residues 1–16 (MKTALILLCILGMASA). Serine 31, serine 68, serine 76, serine 77, and serine 96 each carry phosphoserine. 3 disordered regions span residues 60-117 (PVQG…VTAS), 136-225 (LPKK…RELT), and 238-264 (FQQTTPPPEAYGTTSPPARKSSTVEYG). The segment covering 67-106 (SSEENGDGDSSEEEGEEEETSNEEENNEDSEGNEDQEAEA) has biased composition (acidic residues). A glycan (N-linked (GlcNAc...) asparagine) is linked at asparagine 108. Basic and acidic residues predominate over residues 139–152 (KAGDAEGKAPKMKE). Serine 153 is modified (phosphoserine). Residues 153-176 (SDEEEEEEEEEENENEEAEVDENE) are compositionally biased toward acidic residues. Composition is skewed to polar residues over residues 177-188 (QVVNGTSTNSTE) and 249-261 (GTTSPPARKSSTV). Residues asparagine 180 and asparagine 185 are each glycosylated (N-linked (GlcNAc...) asparagine). The Integrin-binding motif motif lies at 289-291 (RGD). Sulfotyrosine occurs at positions 316 and 317.

Monomer. Interacts with integrins; the interaction promotes cell adhesion.

The protein resides in the secreted. Its function is as follows. Binds tightly to hydroxyapatite. Appears to form an integral part of the mineralized matrix. Probably important to cell-matrix interaction. Promotes adhesion and migration of various cells via the alpha-V/beta-3 integrin receptor (ITGAV:ITGB3). The chain is Integrin-binding sialoprotein (Ibsp) from Rattus norvegicus (Rat).